The following is a 467-amino-acid chain: Zinc finger protein ZIC 3 (467 aa).

Residues 66–107 (LSSGQSSAFTPQGSGYANALGHHHHHHHHHHHTSQVPSYGGA) are disordered. Positions 67–80 (SSGQSSAFTPQGSG) are enriched in polar residues. The span at 86-98 (GHHHHHHHHHHHT) shows a compositional bias: basic residues. Lysine 248 participates in a covalent cross-link: Glycyl lysine isopeptide (Lys-Gly) (interchain with G-Cter in SUMO2). The C2H2-type 1; atypical zinc finger occupies 251–286 (LSCKWIDEAQLSRPKKSCDRTFSTMHELVTHVTMEH). A C2H2-type 2; atypical zinc finger spans residues 295-322 (HVCYWEECPREGKSFKAKYKLVNHIRVH). 2 consecutive short sequence motifs (nuclear localization signal) follow at residues 297 to 322 (CYWE…IRVH) and 330 to 352 (CPFP…KRTH). 3 consecutive C2H2-type zinc fingers follow at residues 328–352 (FPCP…KRTH), 358–382 (FKCE…MHVH), and 388–410 (YICK…MKVH). Residues 404–467 (RKHMKVHESQ…LPPNFNEWYV (64 aa)) form a disordered region. The segment covering 412 to 428 (SQGSDSSPAASSGYESS) has biased composition (low complexity). Polar residues predominate over residues 435–455 (SANSKDTTKTPSAVQTSTSHN).

This sequence belongs to the GLI C2H2-type zinc-finger protein family. Interacts (via the C2H2-type domains 3, 4 and 5) with MDFIC (via the C2H2-type domains 3, 4 and 5); the interaction reduces its transcriptional activity. Interacts with KPNA1 and KPNA6. Interacts (via C2H2-type domains 3, 4 and 5) with GLI3; the interaction enhances its transcriptional activity.

It is found in the nucleus. Its subcellular location is the cytoplasm. Functionally, acts as a transcriptional activator. Required in the earliest stages in both axial midline development and left-right (LR) asymmetry specification. Binds to the minimal GLI-consensus sequence 5'-GGGTGGTC-3'. The polypeptide is Zinc finger protein ZIC 3 (ZIC3) (Homo sapiens (Human)).